We begin with the raw amino-acid sequence, 396 residues long: Actin-related protein 6 (396 aa).

T2 carries the post-translational modification N-acetylthreonine. K260 carries the N6-acetyllysine modification.

Belongs to the actin family. ARP6 subfamily. Component of the chromatin-remodeling SRCAP complex composed of at least SRCAP, DMAP1, RUVBL1, RUVBL2, ACTL6A, YEATS4, ACTR6 and ZNHIT1. Interacts with CBX1, CBX3 and CBX5.

It is found in the cytoplasm. The protein localises to the cytoskeleton. The protein resides in the nucleus. It localises to the nucleolus. In terms of biological role, required for formation and/or maintenance of proper nucleolar structure and function. Plays a dual role in the regulation of ribosomal DNA (rDNA) transcription. In the presence of high glucose, maintains active rDNA transcription through H2A.Z deposition and under glucose starvation, is required for the repression of rDNA transcription, and this function may be independent of H2A.Z. This is Actin-related protein 6 (Actr6) from Mus musculus (Mouse).